The following is a 972-amino-acid chain: SWI/SNF-related matrix-associated actin-dependent regulator of chromatin subfamily A containing DEAD/H box 1A (972 aa).

3 disordered regions span residues 15-76, 125-177, and 217-333; these read NAVG…SDLQ, DEDS…EKQE, and SSTD…EDSI. Basic and acidic residues-rich tracts occupy residues 22–42 and 63–72; these read KSPD…RKAD and EVVRMGKDSA. A CUE 1 domain is found at 82-127; that stretch reads DMEDKIIKLLEIFPQKSKKDLLEVIENTSTLDGAVAHCLMIYGDED. A compositionally biased stretch (basic and acidic residues) spans 128-138; the sequence is SGGRKDKGGRS. Residues 156–169 are compositionally biased toward acidic residues; sequence SESEDEDSEDEESE. The CUE 2 domain occupies 175 to 218; the sequence is KQEALLKKLKRKLPDIEKEVLRDILKEHDWDYENALGSLLVFSS. The segment covering 237 to 246 has biased composition (basic and acidic residues); the sequence is HSKEKTDKIT. Residues 247–263 show a composition bias toward polar residues; that stretch reads QRPSGSSSLSRWLTAAS. Residues 279–290 show a composition bias toward low complexity; that stretch reads KSALSKSTSKNS. Acidic residues predominate over residues 307–332; that stretch reads ASEDEDEIDSDVDSMSDDQDSEDEDS. The region spanning 460 to 628 is the Helicase ATP-binding domain; it reads ILLHQHKLSG…MSLLNFIMPS (169 aa). 473 to 480 serves as a coordination point for ATP; it reads DEMGLGKT. The DEGH box motif lies at 579–582; the sequence is DEGH. A Helicase C-terminal domain is found at 805 to 966; that stretch reads LLTKTLAKLK…AITEQMAELL (162 aa).

This sequence belongs to the SNF2/RAD54 helicase family.

The protein resides in the nucleus. Its subcellular location is the chromosome. The catalysed reaction is ATP + H2O = ADP + phosphate + H(+). In terms of biological role, DNA helicase that possesses intrinsic ATP-dependent nucleosome-remodeling activity and is both required for DNA repair and heterochromatin organization. Promotes DNA end resection of double-strand breaks (DSBs) following DNA damage: probably acts by weakening histone DNA interactions in nucleosomes flanking DSBs. Required for the restoration of heterochromatin organization after replication. The sequence is that of SWI/SNF-related matrix-associated actin-dependent regulator of chromatin subfamily A containing DEAD/H box 1A (smarcad1a) from Danio rerio (Zebrafish).